The primary structure comprises 104 residues: MTDCRLAGSPTKRSPSLVKATTDGVVLEPSAFSIILGTLPSIIATAELVVPKSIPITASGILVDWKRVRIRSILCALKAFHDGNMLLEFKFLIMTSEIVTNALR.

This is an uncharacterized protein from Saccharomyces cerevisiae (strain ATCC 204508 / S288c) (Baker's yeast).